We begin with the raw amino-acid sequence, 254 residues long: Urease accessory protein UreD (254 aa).

It belongs to the UreD family. In terms of assembly, ureD, UreF and UreG form a complex that acts as a GTP-hydrolysis-dependent molecular chaperone, activating the urease apoprotein by helping to assemble the nickel containing metallocenter of UreC. The UreE protein probably delivers the nickel.

The protein resides in the cytoplasm. Required for maturation of urease via the functional incorporation of the urease nickel metallocenter. The polypeptide is Urease accessory protein UreD (Streptomyces coelicolor (strain ATCC BAA-471 / A3(2) / M145)).